We begin with the raw amino-acid sequence, 348 residues long: Protein RecA (348 aa).

65–72 (GPESSGKT) is an ATP binding site.

This sequence belongs to the RecA family.

It is found in the cytoplasm. Can catalyze the hydrolysis of ATP in the presence of single-stranded DNA, the ATP-dependent uptake of single-stranded DNA by duplex DNA, and the ATP-dependent hybridization of homologous single-stranded DNAs. It interacts with LexA causing its activation and leading to its autocatalytic cleavage. This Enterococcus faecalis (strain ATCC 700802 / V583) protein is Protein RecA.